Reading from the N-terminus, the 1241-residue chain is ATP-dependent helicase/nuclease subunit A (1241 aa).

One can recognise a UvrD-like helicase ATP-binding domain in the interval 12-485 (SQWTDDQWKA…IDLAKNFRSR (474 aa)). An ATP-binding site is contributed by 33–40 (AAAGSGKT). The UvrD-like helicase C-terminal domain occupies 505-805 (GEIDYDADAE…RIMTIHKSKG (301 aa)).

This sequence belongs to the helicase family. AddA subfamily. In terms of assembly, heterodimer of AddA and AddB/RexB. Requires Mg(2+) as cofactor.

The enzyme catalyses Couples ATP hydrolysis with the unwinding of duplex DNA by translocating in the 3'-5' direction.. It carries out the reaction ATP + H2O = ADP + phosphate + H(+). In terms of biological role, the heterodimer acts as both an ATP-dependent DNA helicase and an ATP-dependent, dual-direction single-stranded exonuclease. Recognizes the chi site generating a DNA molecule suitable for the initiation of homologous recombination. The AddA nuclease domain is required for chi fragment generation; this subunit has the helicase and 3' -&gt; 5' nuclease activities. The polypeptide is ATP-dependent helicase/nuclease subunit A (Bacillus cereus (strain Q1)).